The following is a 369-amino-acid chain: Cyclin-dependent kinase 5 activator 2 (369 aa).

Residues 1–11 show a composition bias toward polar residues; that stretch reads MGTVLSLSPAS. Disordered stretches follow at residues 1–55, 72–176, and 330–369; these read MGTV…SRLK, ASAK…SPRR, and EAAASTGGPPSGSSASTTSSSSARDSCATGAKHWTMNLDR. Glycine 2 carries N-myristoyl glycine lipidation. Residues 74–84 show a composition bias toward basic residues; the sequence is AKKKKGSKKVT. The residue at position 84 (threonine 84) is a Phosphothreonine. A compositionally biased stretch (basic and acidic residues) spans 99 to 112; it reads RNRENLLRKGRDGP. The segment covering 122-144 has biased composition (low complexity); the sequence is AVPVPTVPTTAATCEPPSGGSAA. Residues 145 to 171 show a composition bias toward pro residues; it reads APPPGSGGGKPPPPPPPAPQAAPPAPG. A compositionally biased stretch (low complexity) spans 331-352; the sequence is AAASTGGPPSGSSASTTSSSSA.

This sequence belongs to the cyclin-dependent kinase 5 activator family. In terms of assembly, heterodimer of a catalytic subunit and a regulatory subunit. Myristoylated. The Gly-2-Ala mutant is absent of the cell periphery, suggesting that a proper myristoylation signal is essential for the proper distribution of CDK5R2 (p39).

Its subcellular location is the cell membrane. In terms of biological role, activator of CDK5/TPKII. In Mus musculus (Mouse), this protein is Cyclin-dependent kinase 5 activator 2 (Cdk5r2).